The sequence spans 519 residues: Cilia- and flagella-associated protein 53 (519 aa).

2 coiled-coil regions span residues 80 to 107 (NRHLQDALDQYQMGIDEKRERLRELLES) and 210 to 339 (LAKE…QEEQ). The disordered stretch occupies residues 498 to 519 (TTAVHPFRRRDRRCSSSGGQMS).

It belongs to the CFAP53 family.

Its subcellular location is the cytoplasm. The protein resides in the cytoskeleton. The protein localises to the cilium axoneme. It localises to the cilium basal body. In terms of biological role, microtubule inner protein (MIP) part of the dynein-decorated doublet microtubules (DMTs) in cilia axoneme, which is required for motile cilia beating. Regulates motility patterns of both 9+0 and 9+2 motile cilia through differential localization and recruitment of axonemal dynein components. Required for cilium motility within the spinal canal and Kuppfer's vesicle and is involved in the establishment of left-right symmetry during embryogenesis. This Danio rerio (Zebrafish) protein is Cilia- and flagella-associated protein 53.